The sequence spans 3546 residues: Ubiquitin carboxyl-terminal hydrolase 34 (3546 aa).

A phosphoserine mark is found at Ser-352, Ser-486, Ser-487, and Ser-490. Disordered stretches follow at residues 502-535 (KEEE…SGGS), 550-679 (VQQR…VFNT), and 1459-1478 (TGSY…DQVE). A compositionally biased stretch (low complexity) spans 511–524 (APSPWSPAASPQSS). 2 stretches are compositionally biased toward polar residues: residues 525–534 (DNSDTHQSGG) and 560–570 (SMQGSSDETAN). Over residues 571–590 (SGEDGSSGPGSSSGHSDGSS) the composition is skewed to low complexity. Positions 591–609 (NEVNSSHASQSAGSPGSEV) are enriched in polar residues. Acidic residues predominate over residues 610 to 627 (QSEDIADIEALKEEDEDD). Ser-649 is subject to Phosphoserine. Residues 659-671 (QGMSERNGTSSGT) show a composition bias toward polar residues. Acidic residues predominate over residues 1467 to 1477 (PDSDDSSEDQV). Position 1469 is a phosphoserine (Ser-1469). A USP domain is found at 1894–2239 (VGLTNLGATC…SAYMLFYKRM (346 aa)). Residue Cys-1903 is the Nucleophile of the active site. The active-site Proton acceptor is the His-2164. The residue at position 2488 (Ser-2488) is a Phosphoserine. The disordered stretch occupies residues 3331–3443 (NSLQEQEAKE…HAEEQSNNGR (113 aa)). Positions 3336–3347 (QEAKERKTKDDE) are enriched in basic and acidic residues. A phosphoserine mark is found at Ser-3358 and Ser-3359. Thr-3381 bears the Phosphothreonine mark. Ser-3386 and Ser-3406 each carry phosphoserine. Over residues 3421–3432 (SSFSEDMSNIRS) the composition is skewed to polar residues. Residues 3433-3443 (QHAEEQSNNGR) show a composition bias toward basic and acidic residues. The residue at position 3503 (Ser-3503) is a Phosphoserine.

The protein belongs to the peptidase C19 family. In terms of assembly, interacts with AXIN1 and AXIN2. As to expression, expressed in brain at low level.

The catalysed reaction is Thiol-dependent hydrolysis of ester, thioester, amide, peptide and isopeptide bonds formed by the C-terminal Gly of ubiquitin (a 76-residue protein attached to proteins as an intracellular targeting signal).. Its function is as follows. Ubiquitin hydrolase that can remove conjugated ubiquitin from AXIN1 and AXIN2, thereby acting as a regulator of Wnt signaling pathway. Acts as an activator of the Wnt signaling pathway downstream of the beta-catenin destruction complex by deubiquitinating and stabilizing AXIN1 and AXIN2, leading to promote nuclear accumulation of AXIN1 and AXIN2 and positively regulate beta-catenin (CTNBB1)-mediated transcription. Recognizes and hydrolyzes the peptide bond at the C-terminal Gly of ubiquitin. Involved in the processing of poly-ubiquitin precursors as well as that of ubiquitinated proteins. This is Ubiquitin carboxyl-terminal hydrolase 34 (USP34) from Homo sapiens (Human).